The chain runs to 273 residues: Glutamate racemase (273 aa).

Substrate contacts are provided by residues 9–10 (DS) and 41–42 (YG). Catalysis depends on cysteine 73, which acts as the Proton donor/acceptor. Substrate is bound at residue 74-75 (NT). Cysteine 183 serves as the catalytic Proton donor/acceptor. Residue 184 to 185 (TH) participates in substrate binding.

This sequence belongs to the aspartate/glutamate racemases family.

The enzyme catalyses L-glutamate = D-glutamate. It participates in cell wall biogenesis; peptidoglycan biosynthesis. Its function is as follows. Provides the (R)-glutamate required for cell wall biosynthesis. This Shewanella sp. (strain ANA-3) protein is Glutamate racemase.